Reading from the N-terminus, the 158-residue chain is MSIEGVFREGFVTTSLDAVINWTRTGSLWPMTFGLACCAVEMIHAGCSRYDLDRFGVVFRPSPRQSDLMIVAGTLCNKMAPALRKVYDQMAEPRWVISMGSCANGGGYYHYSYSVVRGCDRIVPVDVYVPGCPPTAEALLYGIIQLQNKIKRTNTIAR.

Residues Cys37, Cys38, Cys102, and Cys132 each contribute to the [4Fe-4S] cluster site.

The protein belongs to the complex I 20 kDa subunit family. In terms of assembly, NDH-1 is composed of 14 different subunits. Subunits NuoB, C, D, E, F, and G constitute the peripheral sector of the complex. The cofactor is [4Fe-4S] cluster.

It localises to the cell inner membrane. It carries out the reaction a quinone + NADH + 5 H(+)(in) = a quinol + NAD(+) + 4 H(+)(out). In terms of biological role, NDH-1 shuttles electrons from NADH, via FMN and iron-sulfur (Fe-S) centers, to quinones in the respiratory chain. Couples the redox reaction to proton translocation (for every two electrons transferred, four hydrogen ions are translocated across the cytoplasmic membrane), and thus conserves the redox energy in a proton gradient. This chain is NADH-quinone oxidoreductase subunit B 1, found in Azoarcus sp. (strain BH72).